A 624-amino-acid chain; its full sequence is uncharacterized protein (624 aa).

Residues 108–138 (PTAWSGMESDSTASERSLPQRTDTTSVSSQY) are disordered. Residue Ser-112 is modified to Phosphoserine. Positions 115-138 (ESDSTASERSLPQRTDTTSVSSQY) are enriched in polar residues. Ser-205 is subject to Phosphoserine. Disordered regions lie at residues 217–236 (LMESSGEKERNGNQELPGTR) and 305–329 (KRECIKLASSPSRMETESSEEPVSE).

This is an uncharacterized protein from Rattus norvegicus (Rat).